The primary structure comprises 464 residues: Arginine biosynthesis bifunctional protein ArgJ, chloroplastic (464 aa).

The substrate site is built by Thr208, Lys234, Thr245, Glu332, Asn459, and Thr464. Thr245 (nucleophile) is an active-site residue.

Belongs to the ArgJ family. Heterodimer of an alpha and a beta chain.

Its subcellular location is the plastid. It localises to the chloroplast. It catalyses the reaction N(2)-acetyl-L-ornithine + L-glutamate = N-acetyl-L-glutamate + L-ornithine. It carries out the reaction L-glutamate + acetyl-CoA = N-acetyl-L-glutamate + CoA + H(+). The protein operates within amino-acid biosynthesis; L-arginine biosynthesis; L-ornithine and N-acetyl-L-glutamate from L-glutamate and N(2)-acetyl-L-ornithine (cyclic): step 1/1. It participates in amino-acid biosynthesis; L-arginine biosynthesis; N(2)-acetyl-L-ornithine from L-glutamate: step 1/4. Its function is as follows. Catalyzes two activities which are involved in the cyclic version of arginine biosynthesis: the synthesis of acetylglutamate from glutamate and acetyl-CoA, and of ornithine by transacetylation between acetylornithine and glutamate. The sequence is that of Arginine biosynthesis bifunctional protein ArgJ, chloroplastic from Zea mays (Maize).